We begin with the raw amino-acid sequence, 423 residues long: Mannose-6-phosphate isomerase (423 aa).

N-acetylalanine is present on A2. Phosphoserine occurs at positions 102 and 108. Positions 110, 112, 137, and 276 each coordinate Zn(2+). R295 is an active-site residue.

Belongs to the mannose-6-phosphate isomerase type 1 family. Requires Zn(2+) as cofactor.

The protein resides in the cytoplasm. It carries out the reaction D-mannose 6-phosphate = D-fructose 6-phosphate. Its pathway is nucleotide-sugar biosynthesis; GDP-alpha-D-mannose biosynthesis; alpha-D-mannose 1-phosphate from D-fructose 6-phosphate: step 1/2. In terms of biological role, isomerase that catalyzes the interconversion of fructose-6-P and mannose-6-P and has a critical role in the supply of D-mannose derivatives required for many eukaryotic glycosylation reactions. The protein is Mannose-6-phosphate isomerase of Rattus norvegicus (Rat).